The following is a 308-amino-acid chain: tRNA pseudouridine synthase B (308 aa).

The active-site Nucleophile is D47.

This sequence belongs to the pseudouridine synthase TruB family. Type 1 subfamily.

It carries out the reaction uridine(55) in tRNA = pseudouridine(55) in tRNA. Responsible for synthesis of pseudouridine from uracil-55 in the psi GC loop of transfer RNAs. This is tRNA pseudouridine synthase B from Xanthomonas euvesicatoria pv. vesicatoria (strain 85-10) (Xanthomonas campestris pv. vesicatoria).